The chain runs to 244 residues: DNA repair protein RecO (244 aa).

The protein belongs to the RecO family.

Involved in DNA repair and RecF pathway recombination. This Geobacter metallireducens (strain ATCC 53774 / DSM 7210 / GS-15) protein is DNA repair protein RecO.